Here is a 257-residue protein sequence, read N- to C-terminus: Imidazole glycerol phosphate synthase subunit HisF (257 aa).

Active-site residues include Asp-12 and Asp-131.

The protein belongs to the HisA/HisF family. As to quaternary structure, heterodimer of HisH and HisF.

It is found in the cytoplasm. The enzyme catalyses 5-[(5-phospho-1-deoxy-D-ribulos-1-ylimino)methylamino]-1-(5-phospho-beta-D-ribosyl)imidazole-4-carboxamide + L-glutamine = D-erythro-1-(imidazol-4-yl)glycerol 3-phosphate + 5-amino-1-(5-phospho-beta-D-ribosyl)imidazole-4-carboxamide + L-glutamate + H(+). It participates in amino-acid biosynthesis; L-histidine biosynthesis; L-histidine from 5-phospho-alpha-D-ribose 1-diphosphate: step 5/9. IGPS catalyzes the conversion of PRFAR and glutamine to IGP, AICAR and glutamate. The HisF subunit catalyzes the cyclization activity that produces IGP and AICAR from PRFAR using the ammonia provided by the HisH subunit. This Kineococcus radiotolerans (strain ATCC BAA-149 / DSM 14245 / SRS30216) protein is Imidazole glycerol phosphate synthase subunit HisF.